A 149-amino-acid chain; its full sequence is Large ribosomal subunit protein uL22c (149 aa).

Belongs to the universal ribosomal protein uL22 family. In terms of assembly, part of the 50S ribosomal subunit.

It localises to the plastid. Its subcellular location is the chloroplast. Functionally, this protein binds specifically to 23S rRNA. Its function is as follows. The globular domain of the protein is located near the polypeptide exit tunnel on the outside of the subunit, while an extended beta-hairpin is found that lines the wall of the exit tunnel in the center of the 70S ribosome. This chain is Large ribosomal subunit protein uL22c (rpl22-A), found in Pelargonium hortorum (Common geranium).